The chain runs to 1203 residues: DNA-directed RNA polymerase subunit beta' (1203 aa).

C60, C62, C75, and C78 together coordinate Zn(2+). Mg(2+) is bound by residues D449, D451, and D453. C818, C892, C899, and C902 together coordinate Zn(2+).

It belongs to the RNA polymerase beta' chain family. The RNAP catalytic core consists of 2 alpha, 1 beta, 1 beta' and 1 omega subunit. When a sigma factor is associated with the core the holoenzyme is formed, which can initiate transcription. The cofactor is Mg(2+). It depends on Zn(2+) as a cofactor.

It catalyses the reaction RNA(n) + a ribonucleoside 5'-triphosphate = RNA(n+1) + diphosphate. DNA-dependent RNA polymerase catalyzes the transcription of DNA into RNA using the four ribonucleoside triphosphates as substrates. This Bacillus cereus (strain ZK / E33L) protein is DNA-directed RNA polymerase subunit beta'.